The sequence spans 750 residues: Amyloid-beta A4 precursor protein-binding family A member 2 (750 aa).

2 disordered regions span residues 1-94 (MAHR…PEEE) and 143-346 (DSVG…IPET). S11 is modified (phosphoserine). The span at 70–80 (GDSSSDYVNNT) shows a compositional bias: polar residues. Residues 81–94 (SEEEDYDEGLPEEE) are compositionally biased toward acidic residues. Positions 185-271 (HYCSSKESYQ…STEACPPSDT (87 aa)) are STXBP1-binding. The residue at position 209 (S209) is a Phosphoserine. Residues 219-228 (DLEEQEEDID) show a composition bias toward acidic residues. Composition is skewed to polar residues over residues 238-248 (LSMTSITSASE) and 332-344 (SDLN…NNIP). One can recognise a PID domain in the interval 367–556 (LIDGIIFAAN…IINTQEMYND (190 aa)). 2 consecutive PDZ domains span residues 569–654 (ELQL…NIVS) and 660–736 (TVLI…MPAA).

Part of a multimeric complex containing STXBP1 and syntaxin-1. Binds to the cytoplasmic domain of amyloid-beta protein, and to the nuclear factor NF-kappa-B/p65 via its PDZ domain. Interacts with the N-terminal domain of NECAB3. As to expression, specifically expressed in neurons, predominantly of the cerebellum, hippocampus, and spinal cord. Lesser extent in neurons of the cerebral cortex and anterior thalmic nuclei.

Putative function in synaptic vesicle exocytosis by binding to STXBP1, an essential component of the synaptic vesicle exocytotic machinery. May modulate processing of the amyloid-beta precursor protein (APP) and hence formation of APP-beta. The polypeptide is Amyloid-beta A4 precursor protein-binding family A member 2 (Apba2) (Mus musculus (Mouse)).